We begin with the raw amino-acid sequence, 277 residues long: Glutamate racemase (277 aa).

Substrate contacts are provided by residues 16–17 (DS) and 48–49 (YG). Cys79 (proton donor/acceptor) is an active-site residue. 80 to 81 (NT) is a substrate binding site. Cys191 serves as the catalytic Proton donor/acceptor. 192-193 (TH) is a substrate binding site.

Belongs to the aspartate/glutamate racemases family.

It catalyses the reaction L-glutamate = D-glutamate. It participates in cell wall biogenesis; peptidoglycan biosynthesis. Functionally, provides the (R)-glutamate required for cell wall biosynthesis. This Symbiobacterium thermophilum (strain DSM 24528 / JCM 14929 / IAM 14863 / T) protein is Glutamate racemase.